Here is a 361-residue protein sequence, read N- to C-terminus: Beta-hexosaminidase (361 aa).

Residues Asp69, Arg77, Arg144, and Lys174–His175 contribute to the substrate site. Catalysis depends on His187, which acts as the Proton donor/acceptor. Asp258 acts as the Nucleophile in catalysis.

It belongs to the glycosyl hydrolase 3 family. NagZ subfamily.

It is found in the cytoplasm. The enzyme catalyses Hydrolysis of terminal non-reducing N-acetyl-D-hexosamine residues in N-acetyl-beta-D-hexosaminides.. It participates in cell wall biogenesis; peptidoglycan recycling. Functionally, plays a role in peptidoglycan recycling by cleaving the terminal beta-1,4-linked N-acetylglucosamine (GlcNAc) from peptide-linked peptidoglycan fragments, giving rise to free GlcNAc, anhydro-N-acetylmuramic acid and anhydro-N-acetylmuramic acid-linked peptides. This chain is Beta-hexosaminidase, found in Neisseria meningitidis serogroup C (strain 053442).